The chain runs to 425 residues: Tol-Pal system protein TolB (425 aa).

A signal peptide spans 1-23 (MQMMKKRILLCLLVGMTCLPVLA).

This sequence belongs to the TolB family. As to quaternary structure, the Tol-Pal system is composed of five core proteins: the inner membrane proteins TolA, TolQ and TolR, the periplasmic protein TolB and the outer membrane protein Pal. They form a network linking the inner and outer membranes and the peptidoglycan layer.

The protein localises to the periplasm. Its function is as follows. Part of the Tol-Pal system, which plays a role in outer membrane invagination during cell division and is important for maintaining outer membrane integrity. The protein is Tol-Pal system protein TolB of Albidiferax ferrireducens (strain ATCC BAA-621 / DSM 15236 / T118) (Rhodoferax ferrireducens).